The primary structure comprises 241 residues: LexA repressor (241 aa).

A DNA-binding region (H-T-H motif) is located at residues 41–61; it reads FREIGNAAGLKSPSSVKHQLQ. Active-site for autocatalytic cleavage activity residues include serine 165 and lysine 202.

It belongs to the peptidase S24 family. As to quaternary structure, homodimer.

The catalysed reaction is Hydrolysis of Ala-|-Gly bond in repressor LexA.. In terms of biological role, represses a number of genes involved in the response to DNA damage (SOS response), including recA and lexA. In the presence of single-stranded DNA, RecA interacts with LexA causing an autocatalytic cleavage which disrupts the DNA-binding part of LexA, leading to derepression of the SOS regulon and eventually DNA repair. This Bifidobacterium longum (strain DJO10A) protein is LexA repressor.